A 2581-amino-acid polypeptide reads, in one-letter code: Highly reducing polyketide synthase sorA (2581 aa).

Positions 14 to 436 (SEPIAIIGMS…GSNAHIILED (423 aa)) constitute a Ketosynthase family 3 (KS3) domain. Residues C187, H322, and H359 each act as for beta-ketoacyl synthase activity in the active site. A malonyl-CoA:ACP transacylase (MAT) domain region spans residues 574–868 (VFTGQGAQWN…VVEVGPHTAL (295 aa)). Positions 966–1103 (HDLLGSIVEG…GLVSVELGES (138 aa)) are N-terminal hotdog fold. The tract at residues 966–1270 (HDLLGSIVEG…GFSYQSLGRS (305 aa)) is dehydratase (DH) domain. The PKS/mFAS DH domain maps to 966 to 1273 (HDLLGSIVEG…YQSLGRSTSL (308 aa)). Residue H998 is the Proton acceptor; for dehydratase activity of the active site. The segment at 1119–1273 (TRRILPADLF…YQSLGRSTSL (155 aa)) is C-terminal hotdog fold. The active-site Proton donor; for dehydratase activity is D1184. Positions 1461–1568 (LEVGAATGAI…SSLLKPGGTL (108 aa)) are methyltransferase (CMet) domain. An enoyl reductase (ER)domain region spans residues 1873 to 2184 (LKPDLLVFGD…AGDQIGKVVL (312 aa)). A ketoreductase (KR) domain region spans residues 2207 to 2389 (VSYLIVGGSG…AVSIDLSVVN (183 aa)). The Carrier domain occupies 2497-2574 (DAVRVVGTAI…QLAIDVVDRS (78 aa)). S2534 carries the post-translational modification O-(pantetheine 4'-phosphoryl)serine.

Its pathway is secondary metabolite biosynthesis. Functionally, highly reducing polyketide synthase; part of the gene cluster that mediates the biosynthesis of sorbicillinoids, a diverse group of yellow secondary metabolites that restrict growth of competing pathogenic fungi but not of bacteria. Sorbicillinoids biosynthesis requires the action of two PKSs. SorA iteratively combines three acetyl units and the growing chain is modified by the ketoacyl reductase subunit, and optional by the enoyl reductase subunit in the second cycle. The polyketide is then handed over to the PKS SorB, which adds three more acetyl units, and two methyl groups. SorB releases an aldehyde, which undergoes spontaneous cyclization resulting in the formation of sorbicillin or 2',3'-dihydrosorbicillin. The monooxygenase sorC oxidizes sorbicillin and 2',3'-dihydrosorbicillin to 2',3'-dihydrosorbicillinol and sorbicillinol, respectively. The oxidoreductase sorD further converts sorbicillinol into oxosorbicillinol. Sorbicillinol is the building block for the other sorbicillinoids such as disorbicillinol, bisvertinolon, and dihydrobisvertinolone. This Penicillium rubens (strain ATCC 28089 / DSM 1075 / NRRL 1951 / Wisconsin 54-1255) (Penicillium chrysogenum) protein is Highly reducing polyketide synthase sorA.